Reading from the N-terminus, the 711-residue chain is Choline transporter-like protein 2 (711 aa).

Residues 1-33 lie on the Cytoplasmic side of the membrane; that stretch reads MGDERPHYYGKHGTPQKYDPTFKGPIYNRGCTD. The residue at position 14 (Thr-14) is a Phosphothreonine. The helical transmembrane segment at 34–54 threads the bilayer; sequence VICCVFLLVAIVGYVAVGIIA. Over 55–232 the chain is Extracellular; the sequence is WTHGDPRKVI…RIFEDYTVSW (178 aa). Asn-187 and Asn-200 each carry an N-linked (GlcNAc...) asparagine glycan. The helical transmembrane segment at 233–253 threads the bilayer; that stretch reads YWIIIGLVIAMAMSLLFIILL. Residues 254-256 lie on the Cytoplasmic side of the membrane; it reads RFL. The chain crosses the membrane as a helical span at residues 257–277; it reads AGIMVWVMIIMVILVLGYGIF. Residues 278–315 lie on the Extracellular side of the membrane; the sequence is HCYMEYSRLRGEAGSDVSLVDLGFQTDFRVYLHLRQTW. Residues 316–336 traverse the membrane as a helical segment; that stretch reads LAFMIILSILEVIIILLLIFL. The Cytoplasmic segment spans residues 337-364; the sequence is RKRILIAIALIKEASRAVGYVMCTMLYP. A helical transmembrane segment spans residues 365 to 385; the sequence is LVTFFLLCLCIAYWASTAVFL. Residues 386-440 lie on the Extracellular side of the membrane; that stretch reads STSNEAVYKIFDDGLCPFTAKTCNPETFPSSNESRQCPNARCQFAFYGGESGYHR. Asn-417 carries N-linked (GlcNAc...) asparagine glycosylation. The helical transmembrane segment at 441–461 threads the bilayer; sequence ALLGLQIFNAFMFFWLANFVL. Topologically, residues 462–504 are cytoplasmic; that stretch reads ALGQVTLAGAFASYYWALRKPDDLPAFPLFSAFGRALRYHTGS. A helical membrane pass occupies residues 505 to 525; that stretch reads LAFGALILAIVQIIRVILEYL. At 526–563 the chain is on the extracellular side; it reads DQRLKAAENKFAKCLMTCLKCCFWCLEKFIKFLNRNAY. Residues 564–584 form a helical membrane-spanning segment; sequence IMIAIYGTNFCTSARNAFFLL. Residues 585-599 are Cytoplasmic-facing; it reads MRNIIRVAVLDKVTD. A helical membrane pass occupies residues 600 to 620; the sequence is FLFLLGKLLIVGSVGILAFFF. Topologically, residues 621–638 are extracellular; the sequence is FTHRIRIVQDTAPPLNYY. The helical transmembrane segment at 639–659 threads the bilayer; that stretch reads WVPILTVIVGSYLIAHGFFSV. At 660-711 the chain is on the cytoplasmic side; that stretch reads YGMCVDTLFLCFCEDLERNDGSQERPYFMSPELRDILLKGSAEEGKRAEAEE.

It belongs to the CTL (choline transporter-like) family. In terms of assembly, interacts with COCH. In terms of processing, N-glycosylated.

It is found in the cell membrane. The protein resides in the mitochondrion outer membrane. The enzyme catalyses choline(out) + n H(+)(in) = choline(in) + n H(+)(out). It catalyses the reaction ethanolamine(out) + n H(+)(in) = ethanolamine(in) + n H(+)(out). Its function is as follows. Choline/H+ antiporter, mainly in mitochodria. Also acts as a low-affinity ethanolamine/H+ antiporter, regulating the supply of extracellular ethanolamine (Etn) for the CDP-Etn pathway, redistribute intracellular Etn and balance the CDP-Cho and CDP-Etn arms of the Kennedy pathway. The protein is Choline transporter-like protein 2 (SLC44A2) of Pongo abelii (Sumatran orangutan).